Here is a 132-residue protein sequence, read N- to C-terminus: Ribosome-binding factor A (132 aa).

The protein belongs to the RbfA family. Monomer. Binds 30S ribosomal subunits, but not 50S ribosomal subunits or 70S ribosomes.

Its subcellular location is the cytoplasm. One of several proteins that assist in the late maturation steps of the functional core of the 30S ribosomal subunit. Associates with free 30S ribosomal subunits (but not with 30S subunits that are part of 70S ribosomes or polysomes). Required for efficient processing of 16S rRNA. May interact with the 5'-terminal helix region of 16S rRNA. The sequence is that of Ribosome-binding factor A from Burkholderia vietnamiensis (strain G4 / LMG 22486) (Burkholderia cepacia (strain R1808)).